A 539-amino-acid chain; its full sequence is Chaperonin GroEL (539 aa).

Residues threonine 30–proline 33, lysine 51, aspartate 87–threonine 91, glycine 415, and aspartate 495 each bind ATP.

The protein belongs to the chaperonin (HSP60) family. In terms of assembly, forms a cylinder of 14 subunits composed of two heptameric rings stacked back-to-back. Interacts with the co-chaperonin GroES.

The protein resides in the cytoplasm. It catalyses the reaction ATP + H2O + a folded polypeptide = ADP + phosphate + an unfolded polypeptide.. Functionally, together with its co-chaperonin GroES, plays an essential role in assisting protein folding. The GroEL-GroES system forms a nano-cage that allows encapsulation of the non-native substrate proteins and provides a physical environment optimized to promote and accelerate protein folding. The chain is Chaperonin GroEL from Serratia rubidaea (Serratia marinorubra).